The sequence spans 500 residues: NAD(P)H-quinone oxidoreductase chain 4, chloroplastic (500 aa).

A run of 14 helical transmembrane segments spans residues Phe-4 to Leu-24, Tyr-35 to Phe-55, Ile-87 to Val-107, Phe-113 to Ser-130, Leu-134 to Met-154, Phe-167 to Leu-187, Ile-211 to His-231, His-242 to Val-262, Ala-272 to Ala-292, Ile-305 to Asp-325, Gly-330 to Gly-350, Leu-386 to Thr-406, Ile-416 to Met-436, and Leu-462 to Val-482.

It belongs to the complex I subunit 4 family.

It is found in the plastid. The protein localises to the chloroplast thylakoid membrane. The enzyme catalyses a plastoquinone + NADH + (n+1) H(+)(in) = a plastoquinol + NAD(+) + n H(+)(out). The catalysed reaction is a plastoquinone + NADPH + (n+1) H(+)(in) = a plastoquinol + NADP(+) + n H(+)(out). The chain is NAD(P)H-quinone oxidoreductase chain 4, chloroplastic (ndhD) from Arabidopsis thaliana (Mouse-ear cress).